A 166-amino-acid polypeptide reads, in one-letter code: Small ribosomal subunit protein uS5 (166 aa).

Residues 11–74 (LQEKLIAVNR…EKARRNMMNV (64 aa)) enclose the S5 DRBM domain.

The protein belongs to the universal ribosomal protein uS5 family. Part of the 30S ribosomal subunit. Contacts proteins S4 and S8.

In terms of biological role, with S4 and S12 plays an important role in translational accuracy. Located at the back of the 30S subunit body where it stabilizes the conformation of the head with respect to the body. The chain is Small ribosomal subunit protein uS5 from Buchnera aphidicola subsp. Acyrthosiphon kondoi (Acyrthosiphon kondoi symbiotic bacterium).